Consider the following 73-residue polypeptide: Conotoxin Asp7/Gla(3)-TxVI (73 aa).

An N-terminal signal peptide occupies residues 1–19 (MQKLIILLLVAAVLMSTQA). A propeptide spanning residues 20–44 (VLQEKRPKEKIKFLSKRKTDAEKQQ) is cleaved from the precursor. Disulfide bonds link Cys-48–Cys-62, Cys-55–Cys-66, and Cys-61–Cys-71. A 4-hydroxyproline mark is found at Pro-49 and Pro-54. 4-carboxyglutamate is present on Glu-60. Trp-64 carries the post-translational modification 6'-bromotryptophan.

Expressed by the venom duct.

Its subcellular location is the secreted. The chain is Conotoxin Asp7/Gla(3)-TxVI from Conus textile (Cloth-of-gold cone).